The sequence spans 519 residues: 2,3-bisphosphoglycerate-independent phosphoglycerate mutase (519 aa).

Residues aspartate 18 and serine 68 each coordinate Mn(2+). The active-site Phosphoserine intermediate is the serine 68. Substrate-binding positions include histidine 129, 159 to 160 (RD), arginine 191, arginine 197, 267 to 270 (RADR), and lysine 341. 5 residues coordinate Mn(2+): aspartate 408, histidine 412, aspartate 449, histidine 450, and histidine 468.

Belongs to the BPG-independent phosphoglycerate mutase family. As to quaternary structure, monomer. Mn(2+) is required as a cofactor.

It carries out the reaction (2R)-2-phosphoglycerate = (2R)-3-phosphoglycerate. It participates in carbohydrate degradation; glycolysis; pyruvate from D-glyceraldehyde 3-phosphate: step 3/5. Functionally, catalyzes the interconversion of 2-phosphoglycerate and 3-phosphoglycerate. The sequence is that of 2,3-bisphosphoglycerate-independent phosphoglycerate mutase from Coxiella burnetii (strain RSA 331 / Henzerling II).